A 1086-amino-acid polypeptide reads, in one-letter code: ATP-dependent helicase/deoxyribonuclease subunit B (1086 aa).

The protein belongs to the helicase family. AddB/RexB type 2 subfamily. As to quaternary structure, heterodimer of AddA and RexB. It depends on Mg(2+) as a cofactor.

The heterodimer acts as both an ATP-dependent DNA helicase and an ATP-dependent, dual-direction single-stranded exonuclease. Recognizes the chi site generating a DNA molecule suitable for the initiation of homologous recombination. This subunit has 5' -&gt; 3' nuclease activity but not helicase activity. This is ATP-dependent helicase/deoxyribonuclease subunit B from Streptococcus uberis (strain ATCC BAA-854 / 0140J).